We begin with the raw amino-acid sequence, 299 residues long: Bifunctional protein FolD (299 aa).

Residues 168–170, serine 193, and isoleucine 234 each bind NADP(+); that span reads GRS.

The protein belongs to the tetrahydrofolate dehydrogenase/cyclohydrolase family. Homodimer.

The catalysed reaction is (6R)-5,10-methylene-5,6,7,8-tetrahydrofolate + NADP(+) = (6R)-5,10-methenyltetrahydrofolate + NADPH. It carries out the reaction (6R)-5,10-methenyltetrahydrofolate + H2O = (6R)-10-formyltetrahydrofolate + H(+). It functions in the pathway one-carbon metabolism; tetrahydrofolate interconversion. Its function is as follows. Catalyzes the oxidation of 5,10-methylenetetrahydrofolate to 5,10-methenyltetrahydrofolate and then the hydrolysis of 5,10-methenyltetrahydrofolate to 10-formyltetrahydrofolate. This is Bifunctional protein FolD from Agrobacterium fabrum (strain C58 / ATCC 33970) (Agrobacterium tumefaciens (strain C58)).